A 291-amino-acid polypeptide reads, in one-letter code: Pyridoxal 5'-phosphate synthase subunit PdxS (291 aa).

Asp23 lines the D-ribose 5-phosphate pocket. Lys80 serves as the catalytic Schiff-base intermediate with D-ribose 5-phosphate. D-ribose 5-phosphate is bound at residue Gly152. D-glyceraldehyde 3-phosphate is bound at residue Arg164. Residues Gly213 and 234-235 contribute to the D-ribose 5-phosphate site; that span reads GS.

It belongs to the PdxS/SNZ family. In terms of assembly, in the presence of PdxT, forms a dodecamer of heterodimers.

It carries out the reaction aldehydo-D-ribose 5-phosphate + D-glyceraldehyde 3-phosphate + L-glutamine = pyridoxal 5'-phosphate + L-glutamate + phosphate + 3 H2O + H(+). It functions in the pathway cofactor biosynthesis; pyridoxal 5'-phosphate biosynthesis. Functionally, catalyzes the formation of pyridoxal 5'-phosphate from ribose 5-phosphate (RBP), glyceraldehyde 3-phosphate (G3P) and ammonia. The ammonia is provided by the PdxT subunit. Can also use ribulose 5-phosphate and dihydroxyacetone phosphate as substrates, resulting from enzyme-catalyzed isomerization of RBP and G3P, respectively. The sequence is that of Pyridoxal 5'-phosphate synthase subunit PdxS from Streptococcus pneumoniae (strain P1031).